Consider the following 375-residue polypeptide: Patatin-1-Kuras 2 (375 aa).

The N-terminal stretch at 1–11 (MILATTSSTFA) is a signal peptide. In terms of domain architecture, PNPLA spans 20 to 218 (LSIDGGGIKG…TVADPALLSV (199 aa)). The GXGXXG signature appears at 24–29 (GGGIKG). The short motif at 63–67 (GTSTG) is the GXSXG element. The active-site Nucleophile is serine 65. Asparagine 103 carries N-linked (GlcNAc...) asparagine glycosylation. The Proton acceptor role is filled by aspartate 204. The DGA/G motif lies at 204-206 (DGA). The stretch at 349–373 (ETYEEALKRFAKLLSDRKKLRANKA) forms a coiled coil.

It belongs to the patatin family. In terms of tissue distribution, tuber.

It is found in the vacuole. Probable lipolytic acyl hydrolase (LAH), an activity which is thought to be involved in the response of tubers to pathogens. This is Patatin-1-Kuras 2 (pat1-k2) from Solanum tuberosum (Potato).